The primary structure comprises 367 residues: MKTSHLIRITLPGALAAALLASQVSQAADLVPPPGYYAAVGERKGSAGSCPSVPPPYTGSLVFTSKYEGSDSARATLNAKAEKAFRSQIKDITDMERGATKLVTQYMRSGRDGDLVCALNWMSAWARAGALQSDDFNHTGKSMRKWALGSLSGAYMRLKFSSSRPLSAHAGQSREIEDWFARLGTQVVRDWSNLPLKKINNHSYWAAWSVMSTAVVTNRRDLFDWAVSEFKVAANQVDEQGFLPNELKRRQRALAYHNYALPPLAMIAAFAQVNGVDLRQENHGALQRLAERVMNGVDDEETFEEKTGEDQDMTDLKVDNKYAWLEPYCALYRCAPKMLEAKKDREPFNSFRLGGEVTRVFSREGGS.

The N-terminal stretch at 1–27 is a signal peptide; that stretch reads MKTSHLIRITLPGALAAALLASQVSQA. Residues 65–66, 138–139, and Tyr-256 contribute to the substrate site; these read SK and HT.

This sequence belongs to the polysaccharide lyase 5 family.

It localises to the periplasm. The catalysed reaction is Eliminative cleavage of alginate to give oligosaccharides with 4-deoxy-alpha-L-erythro-hex-4-enuronosyl groups at their non-reducing ends and beta-D-mannuronate at their reducing end.. Its function is as follows. Catalyzes the depolymerization of alginate by cleaving the beta-1,4 glycosidic bond between two adjacent sugar residues via a beta-elimination mechanism. May serve to degrade mislocalized alginate that is trapped in the periplasmic space. This is Alginate lyase from Pseudomonas paraeruginosa (strain DSM 24068 / PA7) (Pseudomonas aeruginosa (strain PA7)).